We begin with the raw amino-acid sequence, 288 residues long: Beta-lactamase CARB-4 (288 aa).

The signal sequence occupies residues 1–17 (MKLLLVFSLLIPSMVFA). Catalysis depends on Ser65, which acts as the Acyl-ester intermediate. Cys72 and Cys118 are joined by a disulfide. 229–231 (RSG) contacts substrate.

It belongs to the class-A beta-lactamase family.

It carries out the reaction a beta-lactam + H2O = a substituted beta-amino acid. Inhibited by clavulanic acid and sulbactam. Its function is as follows. Hydrolyzes carbenicillin. Methicillin and oxacillin are weakly hydrolyzed. This is Beta-lactamase CARB-4 (carB4) from Pseudomonas aeruginosa.